The chain runs to 303 residues: Probable 5-dehydro-4-deoxyglucarate dehydratase (303 aa).

It belongs to the DapA family.

The catalysed reaction is 5-dehydro-4-deoxy-D-glucarate + H(+) = 2,5-dioxopentanoate + CO2 + H2O. It participates in carbohydrate acid metabolism; D-glucarate degradation; 2,5-dioxopentanoate from D-glucarate: step 2/2. This chain is Probable 5-dehydro-4-deoxyglucarate dehydratase, found in Delftia acidovorans (strain DSM 14801 / SPH-1).